We begin with the raw amino-acid sequence, 307 residues long: Streptomycin 6-kinase (307 aa).

133–145 (LAGLLNRLHSVPA) provides a ligand contact to streptomycin. Asp201 acts as the Proton acceptor in catalysis.

The protein belongs to the aminoglycoside phosphotransferase family.

The catalysed reaction is streptomycin + ATP = streptomycin 6-phosphate + ADP + H(+). The aminoglycoside phosphotransferases achieve inactivation of their antibiotic substrates by phosphorylation. The protein is Streptomycin 6-kinase (aphD) of Streptomyces griseus.